Consider the following 563-residue polypeptide: Inclusion body clearance protein IML2 (563 aa).

It belongs to the IML2 family. As to quaternary structure, interacts with lipid droplet proteins.

Its subcellular location is the cytoplasm. It is found in the nucleus. Inclusion body (IB) resident protein that interacts strongly with lipid droplet (LD) proteins. Involved in LD-mediated IB clearing after protein folding stress, probably by enabling access to the IBs of an LD-stored soluble sterol derivative that acts as a chaperone in inclusion clearing. The polypeptide is Inclusion body clearance protein IML2 (Schizosaccharomyces pombe (strain 972 / ATCC 24843) (Fission yeast)).